A 352-amino-acid chain; its full sequence is Photosystem II D2 protein 2 (352 aa).

The helical transmembrane segment at 40–60 (CAYLALGGWLTGTSFVTSWYT) threads the bilayer. H117 serves as a coordination point for chlorophyll a. The chain crosses the membrane as a helical span at residues 124–140 (GFMLRQFEIARLVGVRP). The pheophytin a site is built by Q129 and N142. A helical transmembrane segment spans residues 152–165 (VFVSVFLMYPLGQS). H197 provides a ligand contact to chlorophyll a. A helical transmembrane segment spans residues 207-227 (GALLCAIHGATVENTLFEDSE). 2 residues coordinate a plastoquinone: H214 and F261. A Fe cation-binding site is contributed by H214. H268 contacts Fe cation. The helical transmembrane segment at 278-294 (GLWMSSIGIVGLALNLR) threads the bilayer.

The protein belongs to the reaction center PufL/M/PsbA/D family. In terms of assembly, PSII is composed of 1 copy each of membrane proteins PsbA, PsbB, PsbC, PsbD, PsbE, PsbF, PsbH, PsbI, PsbJ, PsbK, PsbL, PsbM, PsbT, PsbX, PsbY, PsbZ, Psb30/Ycf12, peripheral proteins PsbO, CyanoQ (PsbQ), PsbU, PsbV and a large number of cofactors. It forms dimeric complexes. It depends on The D1/D2 heterodimer binds P680, chlorophylls that are the primary electron donor of PSII, and subsequent electron acceptors. It shares a non-heme iron and each subunit binds pheophytin, quinone, additional chlorophylls, carotenoids and lipids. There is also a Cl(-1) ion associated with D1 and D2, which is required for oxygen evolution. The PSII complex binds additional chlorophylls, carotenoids and specific lipids. as a cofactor.

It localises to the cellular thylakoid membrane. It catalyses the reaction 2 a plastoquinone + 4 hnu + 2 H2O = 2 a plastoquinol + O2. Its function is as follows. Photosystem II (PSII) is a light-driven water:plastoquinone oxidoreductase that uses light energy to abstract electrons from H(2)O, generating O(2) and a proton gradient subsequently used for ATP formation. It consists of a core antenna complex that captures photons, and an electron transfer chain that converts photonic excitation into a charge separation. The D1/D2 (PsbA/PsbD) reaction center heterodimer binds P680, the primary electron donor of PSII as well as several subsequent electron acceptors. D2 is needed for assembly of a stable PSII complex. The chain is Photosystem II D2 protein 2 from Synechococcus sp. (strain ATCC 27144 / PCC 6301 / SAUG 1402/1) (Anacystis nidulans).